An 84-amino-acid polypeptide reads, in one-letter code: Putative pelota-like protein YCL001W-B (84 aa).

Belongs to the eukaryotic release factor 1 family. Pelota subfamily. Highly divergent.

The polypeptide is Putative pelota-like protein YCL001W-B (Saccharomyces cerevisiae (strain ATCC 204508 / S288c) (Baker's yeast)).